Here is a 390-residue protein sequence, read N- to C-terminus: MSRVIWIVIDSVGIGALPDAEKFGDSKDVSTLGNIFKEYPDIQIPNMRNLGIGNIDGIDFFESIKEPIGCFGKCKEMSQGKDTTTGHWEMTGIIVDKPFKTFEHGFSKEIIEEFEKKTGRKVVGNKPASGTVIIDEYGEHQIKTGDVIVYTSADSVFQIAANEEVIPLEELYNMCKIAREIMMGDNAVARVIARPFIGKKKGEFVRTSNRRDYSLDPFEPTVLDNIKESGLDVLAVGKIEDIFNGKGITDAIHTKSNMDGVDETLNYMKQDNKGLIYSNLVDFDSKYGHRRDPEGYKKALEEFDSRLPEIMANMREDDILIINADHGNDPTYKGTDHTREYIPVMIYGNKIKKGFNLGVKDTFADIGATVADILNVKLPKHGSSFKGDLF.

Residues D10, D284, H289, D325, H326, and H337 each contribute to the Mn(2+) site.

This sequence belongs to the phosphopentomutase family. The cofactor is Mn(2+).

It localises to the cytoplasm. The enzyme catalyses 2-deoxy-alpha-D-ribose 1-phosphate = 2-deoxy-D-ribose 5-phosphate. It carries out the reaction alpha-D-ribose 1-phosphate = D-ribose 5-phosphate. It participates in carbohydrate degradation; 2-deoxy-D-ribose 1-phosphate degradation; D-glyceraldehyde 3-phosphate and acetaldehyde from 2-deoxy-alpha-D-ribose 1-phosphate: step 1/2. In terms of biological role, isomerase that catalyzes the conversion of deoxy-ribose 1-phosphate (dRib-1-P) and ribose 1-phosphate (Rib-1-P) to deoxy-ribose 5-phosphate (dRib-5-P) and ribose 5-phosphate (Rib-5-P), respectively. This is Phosphopentomutase from Clostridioides difficile (strain 630) (Peptoclostridium difficile).